The primary structure comprises 547 residues: CTP synthase (547 aa).

An amidoligase domain region spans residues 1–267 (MTKFVFVTGG…AQQTLALLNL (267 aa)). Residue Ser13 participates in CTP binding. Ser13 is a binding site for UTP. Residues 14–19 (SIGKGI) and Asp71 contribute to the ATP site. Mg(2+)-binding residues include Asp71 and Glu141. CTP is bound by residues 148–150 (DIE), 188–193 (KTKPTQ), and Lys224. Residues 188 to 193 (KTKPTQ) and Lys224 contribute to the UTP site. A Glutamine amidotransferase type-1 domain is found at 292-534 (EIALVGKYVQ…VKAAVDHYST (243 aa)). Gly354 contributes to the L-glutamine binding site. Cys381 serves as the catalytic Nucleophile; for glutamine hydrolysis. Residues 382–385 (LGMQ), Glu405, and Arg462 contribute to the L-glutamine site. Catalysis depends on residues His507 and Glu509.

Belongs to the CTP synthase family. In terms of assembly, homotetramer.

The enzyme catalyses UTP + L-glutamine + ATP + H2O = CTP + L-glutamate + ADP + phosphate + 2 H(+). The catalysed reaction is L-glutamine + H2O = L-glutamate + NH4(+). It catalyses the reaction UTP + NH4(+) + ATP = CTP + ADP + phosphate + 2 H(+). The protein operates within pyrimidine metabolism; CTP biosynthesis via de novo pathway; CTP from UDP: step 2/2. Its activity is regulated as follows. Allosterically activated by GTP, when glutamine is the substrate; GTP has no effect on the reaction when ammonia is the substrate. The allosteric effector GTP functions by stabilizing the protein conformation that binds the tetrahedral intermediate(s) formed during glutamine hydrolysis. Inhibited by the product CTP, via allosteric rather than competitive inhibition. Functionally, catalyzes the ATP-dependent amination of UTP to CTP with either L-glutamine or ammonia as the source of nitrogen. Regulates intracellular CTP levels through interactions with the four ribonucleotide triphosphates. In Rippkaea orientalis (strain PCC 8801 / RF-1) (Cyanothece sp. (strain PCC 8801)), this protein is CTP synthase.